Consider the following 526-residue polypeptide: ESX-1 secretion-associated protein EspB (526 aa).

The segment covering 1–23 (MSEELKYELPGLERKAHECESTR) has biased composition (basic and acidic residues). Disordered stretches follow at residues 1-35 (MSEE…KPDE), 91-110 (RQMN…VPDM), and 271-526 (QIQE…GKQQ). A compositionally biased stretch (gly residues) spans 303-328 (GGPGGPGSGSGGGSGGGASGGSGGGT). Low complexity predominate over residues 335–362 (PSTDPSMSPMSTNSAGEEQSSGSPSSGG). A compositionally biased stretch (gly residues) spans 363–387 (SSSGGSPSGGSPSGGGAPSSGGMPE). Residues 393 to 405 (DMPGGPDIPGLDD) are compositionally biased toward low complexity. Over residues 413–429 (AGGGGGGGVGGGGGGGM) the composition is skewed to gly residues. Low complexity predominate over residues 430-440 (PAAPLGPAVGA). Residues 451-484 (RGGGVGVPTGTGGGAGGMMGGGMGGMGAGHGQGQ) are compositionally biased toward gly residues. A compositionally biased stretch (basic and acidic residues) spans 485-508 (GKEKKRDPKLAPDEDLYTEDRAHS).

This sequence belongs to the EspB family.

The protein localises to the secreted. Its function is as follows. Involved in DNA conjugation, at least in the recipient strain. The chain is ESX-1 secretion-associated protein EspB from Mycolicibacterium smegmatis (strain MKD8) (Mycobacterium smegmatis).